The sequence spans 142 residues: Putative pre-16S rRNA nuclease (142 aa).

It belongs to the YqgF nuclease family.

The protein resides in the cytoplasm. In terms of biological role, could be a nuclease involved in processing of the 5'-end of pre-16S rRNA. In Mesoplasma florum (strain ATCC 33453 / NBRC 100688 / NCTC 11704 / L1) (Acholeplasma florum), this protein is Putative pre-16S rRNA nuclease.